We begin with the raw amino-acid sequence, 168 residues long: ATP synthase subunit d, mitochondrial (168 aa).

Belongs to the ATPase d subunit family. F-type ATPases have 2 components, CF(1) - the catalytic core - and CF(0) - the membrane proton channel. CF(0) seems to have nine subunits: a, b, c, d, e, f, g, F6 and 8 (or A6L).

It localises to the mitochondrion. The protein resides in the mitochondrion inner membrane. Mitochondrial membrane ATP synthase (F(1)F(0) ATP synthase or Complex V) produces ATP from ADP in the presence of a proton gradient across the membrane which is generated by electron transport complexes of the respiratory chain. F-type ATPases consist of two structural domains, F(1) - containing the extramembraneous catalytic core, and F(0) - containing the membrane proton channel, linked together by a central stalk and a peripheral stalk. During catalysis, ATP synthesis in the catalytic domain of F(1) is coupled via a rotary mechanism of the central stalk subunits to proton translocation. Part of the complex F(0) domain and the peripheric stalk, which acts as a stator to hold the catalytic alpha(3)beta(3) subcomplex and subunit a/ATP6 static relative to the rotary elements. The chain is ATP synthase subunit d, mitochondrial from Arabidopsis thaliana (Mouse-ear cress).